The primary structure comprises 313 residues: Extracellular metalloprotease (313 aa).

Residues 1-34 form the signal peptide; that stretch reads MKLVPRFRKQWFAYLTVLCLALAAAVSFGVPAKA. Residues 35–74 form a disordered region; the sequence is AENPQTSVSNTGKEADATKNQTSKADQVSAPYEGTGKTSK. Positions 35 to 93 are excised as a propeptide; sequence AENPQTSVSNTGKEADATKNQTSKADQVSAPYEGTGKTSKSLYGGQTELEKNIQTLQPS. A compositionally biased stretch (polar residues) spans 37 to 60; it reads NPQTSVSNTGKEADATKNQTSKAD. An intrachain disulfide couples Cys131 to Cys147. Catalysis depends on charge relay system residues His146 and Ser267.

The protein belongs to the peptidase S1B family. Monomer.

Its subcellular location is the secreted. This is Extracellular metalloprotease (mpr) from Bacillus subtilis (strain 168).